A 929-amino-acid polypeptide reads, in one-letter code: Alanine--tRNA ligase (929 aa).

Residues His619, His623, Cys722, and His726 each contribute to the Zn(2+) site.

It belongs to the class-II aminoacyl-tRNA synthetase family. The cofactor is Zn(2+).

The protein resides in the cytoplasm. It catalyses the reaction tRNA(Ala) + L-alanine + ATP = L-alanyl-tRNA(Ala) + AMP + diphosphate. Catalyzes the attachment of alanine to tRNA(Ala) in a two-step reaction: alanine is first activated by ATP to form Ala-AMP and then transferred to the acceptor end of tRNA(Ala). Also edits incorrectly charged Ser-tRNA(Ala) and Gly-tRNA(Ala) via its editing domain. This is Alanine--tRNA ligase from Halobacterium salinarum (strain ATCC 29341 / DSM 671 / R1).